The following is a 119-amino-acid chain: Early E3 13.3 kDa protein (119 aa).

In Canine adenovirus serotype 1 (strain Utrecht) (CAdV-1), this protein is Early E3 13.3 kDa protein.